An 811-amino-acid chain; its full sequence is Actin filament-associated protein 1-like 2 (811 aa).

Disordered regions lie at residues 67–110 (KEAQ…PPPK) and 132–168 (EPYNASFNDDGEAVSSSYESYDEDESNKSKSAMQQHQ). The region spanning 181–277 (DAMICAFLWR…WLKVIQDISG (97 aa)) is the PH 1 domain. Residues 294–326 (QRQIHPKAEGTDRHSGASESGSSTDGHPETPEI) are disordered. The span at 299–309 (PKAEGTDRHSG) shows a compositional bias: basic and acidic residues. One can recognise a PH 2 domain in the interval 359-453 (ALETSNYLNV…WLGLLLLESG (95 aa)). Disordered regions lie at residues 500–532 (RGQRYQQDDLYDDVDMSDIQGDEPKSEEKGEAE) and 558–631 (LGSP…KERV). Composition is skewed to basic and acidic residues over residues 521–532 (DEPKSEEKGEAE), 566–577 (VSGKKDNEESER), and 622–631 (RLEKSNKERV). The stretch at 642 to 737 (LLGKNRTEAE…KENLRKAELG (96 aa)) forms a coiled coil.

Interacts with src.

It localises to the cytoplasm. Functionally, may play a role in a signaling cascade by enhancing the kinase activity of src. Contributes to src-regulated transcription activation. This Xenopus laevis (African clawed frog) protein is Actin filament-associated protein 1-like 2 (afap1l2).